We begin with the raw amino-acid sequence, 94 residues long: Small ribosomal subunit protein uS19 (94 aa).

Belongs to the universal ribosomal protein uS19 family.

Its function is as follows. Protein S19 forms a complex with S13 that binds strongly to the 16S ribosomal RNA. The protein is Small ribosomal subunit protein uS19 of Nitrosomonas eutropha (strain DSM 101675 / C91 / Nm57).